We begin with the raw amino-acid sequence, 277 residues long: Zinc transporter ZupT (277 aa).

The next 8 helical transmembrane spans lie at 7–27 (VLLA…GSAI), 38–58 (FLAV…FVEI), 73–93 (VLAS…IAVI), 133–155 (AGVL…AFSA), 165–187 (AIAV…PIYY), 196–216 (FLYS…GYVV), 220–240 (FFTP…MVYI), and 257–277 (LCIL…LLFL). Positions 145 and 148 each coordinate Fe(2+). Positions 148 and 173 each coordinate Zn(2+). Residues N174, E177, and E206 each coordinate Fe(2+). E177 is a Zn(2+) binding site.

The protein belongs to the ZIP transporter (TC 2.A.5) family. ZupT subfamily.

Its subcellular location is the cell inner membrane. It catalyses the reaction Zn(2+)(in) = Zn(2+)(out). Mediates zinc uptake. May also transport other divalent cations. The chain is Zinc transporter ZupT from Nitratidesulfovibrio vulgaris (strain ATCC 29579 / DSM 644 / CCUG 34227 / NCIMB 8303 / VKM B-1760 / Hildenborough) (Desulfovibrio vulgaris).